The primary structure comprises 309 residues: Protein FdhE (309 aa).

It belongs to the FdhE family.

It localises to the cytoplasm. In terms of biological role, necessary for formate dehydrogenase activity. This chain is Protein FdhE, found in Escherichia coli O9:H4 (strain HS).